The chain runs to 46 residues: Probable butyrate kinase (46 aa).

It belongs to the acetokinase family.

Its subcellular location is the cytoplasm. The enzyme catalyses butanoate + ATP = butanoyl phosphate + ADP. This Geobacillus stearothermophilus (Bacillus stearothermophilus) protein is Probable butyrate kinase (buk).